The following is a 440-amino-acid chain: Chromosome partition protein MukF (440 aa).

The leucine-zipper stretch occupies residues 208-236 (LSETSGTLRELQDTLEAAGDKLQANLLRI).

It belongs to the MukF family. As to quaternary structure, interacts, and probably forms a ternary complex, with MukE and MukB via its C-terminal region. The complex formation is stimulated by calcium or magnesium. It is required for an interaction between MukE and MukB.

The protein localises to the cytoplasm. It is found in the nucleoid. Its function is as follows. Involved in chromosome condensation, segregation and cell cycle progression. May participate in facilitating chromosome segregation by condensation DNA from both sides of a centrally located replisome during cell division. Not required for mini-F plasmid partitioning. Probably acts via its interaction with MukB and MukE. Overexpression results in anucleate cells. It has a calcium binding activity. This Shigella boydii serotype 18 (strain CDC 3083-94 / BS512) protein is Chromosome partition protein MukF.